The following is a 232-amino-acid chain: MLRSLFRRLFKYLLWFMAASVVLVAVLRWVPPPGTMVMVERKVGSWVDGQPIDLQRDWRSWEQLPDSLKVAVIAGEDQHFAEHHGFDLPAIQQALAHNERGGSIRGASTLSQQVAKNVFLWSGRSWLRKGLEAWFTLLIETLWTKQRILEVYLNSAEWGPGVFGAQAAARYHFGLDAERLSRTQASQLAAVLPSPLKWSAARPGPYVRQRAAWIRQQMWQLGGDDYLLRLER.

A helical transmembrane segment spans residues 12–31; it reads YLLWFMAASVVLVAVLRWVP.

The protein belongs to the glycosyltransferase 51 family.

It is found in the cell inner membrane. It carries out the reaction [GlcNAc-(1-&gt;4)-Mur2Ac(oyl-L-Ala-gamma-D-Glu-L-Lys-D-Ala-D-Ala)](n)-di-trans,octa-cis-undecaprenyl diphosphate + beta-D-GlcNAc-(1-&gt;4)-Mur2Ac(oyl-L-Ala-gamma-D-Glu-L-Lys-D-Ala-D-Ala)-di-trans,octa-cis-undecaprenyl diphosphate = [GlcNAc-(1-&gt;4)-Mur2Ac(oyl-L-Ala-gamma-D-Glu-L-Lys-D-Ala-D-Ala)](n+1)-di-trans,octa-cis-undecaprenyl diphosphate + di-trans,octa-cis-undecaprenyl diphosphate + H(+). It participates in cell wall biogenesis; peptidoglycan biosynthesis. Peptidoglycan polymerase that catalyzes glycan chain elongation from lipid-linked precursors. The sequence is that of Biosynthetic peptidoglycan transglycosylase from Pseudomonas aeruginosa (strain ATCC 15692 / DSM 22644 / CIP 104116 / JCM 14847 / LMG 12228 / 1C / PRS 101 / PAO1).